Reading from the N-terminus, the 218-residue chain is Small ribosomal subunit protein uS3c (218 aa).

Residues 47 to 118 enclose the KH type-2 domain; sequence VRKHIKSSSN…KLRMALTEVE (72 aa).

This sequence belongs to the universal ribosomal protein uS3 family. In terms of assembly, part of the 30S ribosomal subunit.

It localises to the plastid. The protein localises to the chloroplast. In Anthoceros angustus (Hornwort), this protein is Small ribosomal subunit protein uS3c (rps3).